Reading from the N-terminus, the 632-residue chain is Transcription factor asR4 (632 aa).

The segment at residues Cys-26–Cys-52 is a DNA-binding region (zn(2)-C6 fungal-type). Residues His-101 to Ser-111 are compositionally biased toward polar residues. 3 disordered regions span residues His-101–Gln-129, Ser-270–His-311, and Thr-324–Thr-356. Over residues Gln-112–Gln-129 the composition is skewed to low complexity. 3 stretches are compositionally biased toward polar residues: residues Ser-270–Asp-286, Pro-294–Val-306, and Ile-329–Val-340.

The protein resides in the nucleus. In terms of biological role, transcription factor; part of the gene cluster that mediates the biosynthesis of xenovulene A, an unusual meroterpenoid that has potent inhibitory effects on the human gamma-aminobutyrate A (GABAA) benzodiazepine receptor. The sequence is that of Transcription factor asR4 from Sarocladium schorii (Acremonium strictum (strain IMI 501407)).